Reading from the N-terminus, the 336-residue chain is Adenylosuccinate synthetase (336 aa).

GTP-binding positions include 12-18 (GDEGKGK) and 42-44 (GHS). The Proton acceptor role is filled by Asp-13. Positions 13 and 42 each coordinate Mg(2+). Residues 13–16 (DEGK), 40–43 (NAGH), Thr-127, Arg-141, Gln-179, Thr-194, and Arg-256 each bind IMP. His-43 acts as the Proton donor in catalysis. Residue 252-258 (TVTGRRR) participates in substrate binding. GTP is bound by residues Arg-258, 284–286 (CLD), and 324–326 (STG).

Belongs to the adenylosuccinate synthetase family. Homodimer. Mg(2+) is required as a cofactor.

The protein resides in the cytoplasm. It catalyses the reaction IMP + L-aspartate + GTP = N(6)-(1,2-dicarboxyethyl)-AMP + GDP + phosphate + 2 H(+). It participates in purine metabolism; AMP biosynthesis via de novo pathway; AMP from IMP: step 1/2. Its function is as follows. Plays an important role in the de novo pathway of purine nucleotide biosynthesis. Catalyzes the first committed step in the biosynthesis of AMP from IMP. This is Adenylosuccinate synthetase from Methanococcus aeolicus (strain ATCC BAA-1280 / DSM 17508 / OCM 812 / Nankai-3).